The chain runs to 504 residues: Myocilin (504 aa).

An N-terminal signal peptide occupies residues 1–32; it reads MRFFCARCCSFGPEMPAVQLLLLACLVWDVGA. An N-linked (GlcNAc...) asparagine glycan is attached at asparagine 57. Residues 74–184 are a coiled coil; the sequence is LQRDSSTQRL…QEVARLRRGQ (111 aa). Disordered stretches follow at residues 106-131 and 170-200; these read QAARPQETQEGLQRELGTLRRERDQL and LESSSQEVARLRRGQCPQTRDTARAVPPGSR. Over residues 122-131 the composition is skewed to basic and acidic residues; sequence GTLRRERDQL. The Olfactomedin-like domain maps to 244–503; that stretch reads GCGELVWVGE…MVTYDIKLSK (260 aa). Cysteine 245 and cysteine 433 form a disulfide bridge. Residues aspartate 380, asparagine 428, alanine 429, isoleucine 477, and aspartate 478 each contribute to the Ca(2+) site. The Microbody targeting signal signature appears at 502–504; it reads SKM.

As to quaternary structure, homodimer (via N-terminus). Can also form higher oligomers. Interacts with OLFM3, FN1, NRCAM, GLDN and NFASC. Interacts (via N-terminus) with MYL2. Interacts with SFRP1, FRZB, FZD7, FZD10, FZD1 and WIF1; regulates Wnt signaling. Interacts with SNTA1; regulates muscle hypertrophy. Interacts with ERBB2 and ERBB3; activates ERBB2-ERBB3 signaling pathway. Interacts with SNCG; affects its secretion and its aggregation. In terms of processing, different isoforms may arise by post-translational modifications. Post-translationally, glycosylated. Palmitoylated. In terms of processing, undergoes a calcium-dependent proteolytic cleavage at Arg-226 by CAPN2 in the endoplasmic reticulum. The result is the production of two fragments, one of 35 kDa containing the C-terminal olfactomedin-like domain, and another of 20 kDa containing the N-terminal leucine zipper-like domain. In terms of tissue distribution, detected in aqueous humor. Detected in the eye (at protein level). Widely expressed. Highly expressed in various types of muscle, ciliary body, papillary sphincter, skeletal muscle, heart, and bone marrow-derived mesenchymal stem cells. Expressed predominantly in the retina. In normal eyes, found in the inner uveal meshwork region and the anterior portion of the meshwork. In contrast, in many glaucomatous eyes, it is found in more regions of the meshwork and seems to be expressed at higher levels than in normal eyes, regardless of the type or clinical severity of glaucoma. The myocilin 35 kDa fragment is detected in aqueous humor and to a lesser extent in iris and ciliary body.

It localises to the secreted. Its subcellular location is the golgi apparatus. The protein localises to the cytoplasmic vesicle. It is found in the extracellular space. The protein resides in the extracellular matrix. It localises to the extracellular exosome. Its subcellular location is the mitochondrion. The protein localises to the mitochondrion intermembrane space. It is found in the mitochondrion inner membrane. The protein resides in the mitochondrion outer membrane. It localises to the rough endoplasmic reticulum. Its subcellular location is the cell projection. The protein localises to the cilium. It is found in the endoplasmic reticulum. Secreted glycoprotein regulating the activation of different signaling pathways in adjacent cells to control different processes including cell adhesion, cell-matrix adhesion, cytoskeleton organization and cell migration. Promotes substrate adhesion, spreading and formation of focal contacts. Negatively regulates cell-matrix adhesion and stress fiber assembly through Rho protein signal transduction. Modulates the organization of actin cytoskeleton by stimulating the formation of stress fibers through interactions with components of Wnt signaling pathways. Promotes cell migration through activation of PTK2 and the downstream phosphatidylinositol 3-kinase signaling. Plays a role in bone formation and promotes osteoblast differentiation in a dose-dependent manner through mitogen-activated protein kinase signaling. Mediates myelination in the peripheral nervous system through ERBB2/ERBB3 signaling. Plays a role as a regulator of muscle hypertrophy through the components of dystrophin-associated protein complex. Involved in positive regulation of mitochondrial depolarization. Plays a role in neurite outgrowth. May participate in the obstruction of fluid outflow in the trabecular meshwork. In Homo sapiens (Human), this protein is Myocilin (MYOC).